A 300-amino-acid polypeptide reads, in one-letter code: Putative glycosyltransferase ORF300 (300 aa).

This sequence belongs to the glycosyltransferase group 1 family. Glycosyltransferase 4 subfamily.

The chain is Putative glycosyltransferase ORF300 from Acidianus hospitalis (AFV-1).